The sequence spans 126 residues: Glycine cleavage system H protein (126 aa).

One can recognise a Lipoyl-binding domain in the interval T24–K105. An N6-lipoyllysine modification is found at K65.

This sequence belongs to the GcvH family. In terms of assembly, the glycine cleavage system is composed of four proteins: P, T, L and H. The cofactor is (R)-lipoate.

Its function is as follows. The glycine cleavage system catalyzes the degradation of glycine. The H protein shuttles the methylamine group of glycine from the P protein to the T protein. This is Glycine cleavage system H protein from Burkholderia cenocepacia (strain HI2424).